The chain runs to 146 residues: Leptin (146 aa).

The cysteines at positions 96 and 146 are disulfide-linked.

The protein belongs to the leptin family.

It is found in the secreted. In terms of biological role, key player in the regulation of energy balance and body weight control. Once released into the circulation, has central and peripheral effects by binding LEPR, found in many tissues, which results in the activation of several major signaling pathways. In the hypothalamus, acts as an appetite-regulating factor that induces a decrease in food intake and an increase in energy consumption by inducing anorexinogenic factors and suppressing orexigenic neuropeptides, also regulates bone mass and secretion of hypothalamo-pituitary-adrenal hormones. In the periphery, increases basal metabolism, influences reproductive function, regulates pancreatic beta-cell function and insulin secretion, is pro-angiogenic for endothelial cell and affects innate and adaptive immunity. In the arcuate nucleus of the hypothalamus, activates by depolarization POMC neurons inducing FOS and SOCS3 expression to release anorexigenic peptides and inhibits by hyperpolarization NPY neurons inducing SOCS3 with a consequent reduction on release of orexigenic peptides. In addition to its known satiety inducing effect, has a modulatory role in nutrient absorption. In the intestine, reduces glucose absorption by enterocytes by activating PKC and leading to a sequential activation of p38, PI3K and ERK signaling pathways which exerts an inhibitory effect on glucose absorption. Acts as a growth factor on certain tissues, through the activation of different signaling pathways increases expression of genes involved in cell cycle regulation such as CCND1, via JAK2-STAT3 pathway, or VEGFA, via MAPK1/3 and PI3K-AKT1 pathways. May also play an apoptotic role via JAK2-STAT3 pathway and up-regulation of BIRC5 expression. Pro-angiogenic, has mitogenic activity on vascular endothelial cells and plays a role in matrix remodeling by regulating the expression of matrix metalloproteinases (MMPs) and tissue inhibitors of metalloproteinases (TIMPs). In innate immunity, modulates the activity and function of neutrophils by increasing chemotaxis and the secretion of oxygen radicals. Increases phagocytosis by macrophages and enhances secretion of pro-inflammatory mediators. Increases cytotoxic ability of NK cells. Plays a pro-inflammatory role, in synergy with IL1B, by inducing NOS2 which promotes the production of IL6, IL8 and Prostaglandin E2, through a signaling pathway that involves JAK2, PI3K, MAP2K1/MEK1 and MAPK14/p38. In adaptive immunity, promotes the switch of memory T-cells towards T helper-1 cell immune responses. Increases CD4(+)CD25(-) T-cell proliferation and reduces autophagy during TCR (T-cell receptor) stimulation, through MTOR signaling pathway activation and BCL2 up-regulation. This chain is Leptin (LEP), found in Gorilla gorilla gorilla (Western lowland gorilla).